We begin with the raw amino-acid sequence, 186 residues long: Hydra actinoporin-like toxin 5 (186 aa).

Residues 1-20 form the signal peptide; it reads MLLYVCLVNLLLQSPSGVDS. The short motif at 158-160 is the Cell attachment site element; that stretch reads RDG.

This sequence belongs to the actinoporin family. HALT subfamily. In terms of assembly, octamer or nonamer in membranes. Monomer in the soluble state. In vitro, interacts with folate receptor alpha (of target organism).

It is found in the nematocyst. It localises to the secreted. Its subcellular location is the target cell membrane. Its function is as follows. Pore-forming protein that forms hydrophilic pores and causes cytolysis. Compared to equinatoxin-2 (AC P61914), it reveals lower cytolysis activity (5-12-fold difference, tested on erythrocytes), a larger pore size (probably 2-3 nm) and different affinity to membrane lipids (100-fold lower affinity to sphingomyelin). Binds to sulfatides (SFT) as well as to the two sphingolipids, lysophosphatidic acid (LPA) and sphingosine-1-phosphate (S1P). It seems to bind more strongly to LPA than to S1P and SFT. Shows cytolytic activity on HeLa cells, with a different potency than its paralogs (from most potent to less potent: HALT-4&gt;HALT-6~HALT-1&gt;HALT-3&gt;HALT-7&gt;HALT-2). Pore formation is a multi-step process that involves specific recognition of membrane lipid by a protein aromatic residues rich region, firm binding to the membrane (mainly driven by hydrophobic interactions) accompanied by the transfer of the N-terminal region to the lipid-water interface and finally pore formation after oligomerization of monomers. In vitro, binds to the folate receptor alpha (FOLR1), a GPI-anchored membrane protein that plays a major role in the uptake of folate/folic acid into cells via endocytosis, suggesting a possible involvement of this receptor in the mechanism of HALT-1-induced cell lysis. In vivo, does not cause visible paralysis in larvae of the blowfly Sarcophaga faculata, the most common arthropod prey of Hydra. The protein is Hydra actinoporin-like toxin 5 of Hydra vulgaris (Hydra).